The chain runs to 274 residues: NH(3)-dependent NAD(+) synthetase (274 aa).

46–53 (GISGGQDS) is a binding site for ATP. Aspartate 52 serves as a coordination point for Mg(2+). A deamido-NAD(+)-binding site is contributed by arginine 140. Position 160 (threonine 160) interacts with ATP. Glutamate 165 lines the Mg(2+) pocket. Deamido-NAD(+)-binding residues include lysine 173 and aspartate 180. ATP-binding residues include lysine 189 and threonine 211. 260-261 (HK) provides a ligand contact to deamido-NAD(+).

This sequence belongs to the NAD synthetase family. As to quaternary structure, homodimer.

It carries out the reaction deamido-NAD(+) + NH4(+) + ATP = AMP + diphosphate + NAD(+) + H(+). The protein operates within cofactor biosynthesis; NAD(+) biosynthesis; NAD(+) from deamido-NAD(+) (ammonia route): step 1/1. Its function is as follows. Catalyzes the ATP-dependent amidation of deamido-NAD to form NAD. Uses ammonia as a nitrogen source. This chain is NH(3)-dependent NAD(+) synthetase, found in Lactococcus lactis subsp. cremoris (strain MG1363).